The following is a 267-amino-acid chain: Small ribosomal subunit protein uS3 (267 aa).

The 69-residue stretch at isoleucine 43 to lysine 111 folds into the KH type-2 domain. Positions phenylalanine 216–glutamate 267 are disordered. The segment covering glutamine 228–glutamine 240 has biased composition (basic residues). Positions arginine 241–glutamate 267 are enriched in low complexity.

The protein belongs to the universal ribosomal protein uS3 family. In terms of assembly, part of the 30S ribosomal subunit. Forms a tight complex with proteins S10 and S14.

Binds the lower part of the 30S subunit head. Binds mRNA in the 70S ribosome, positioning it for translation. The chain is Small ribosomal subunit protein uS3 from Bifidobacterium adolescentis (strain ATCC 15703 / DSM 20083 / NCTC 11814 / E194a).